The sequence spans 621 residues: Chaperone protein HtpG (621 aa).

Residues 1–328 are a; substrate-binding; that stretch reads MTQEKKKFDA…SEDLPLNISR (328 aa). Residues 329–544 are b; that stretch reads ESLQHNNVLE…DTAMDIRMER (216 aa). The tract at residues 545 to 621 is c; that stretch reads FLIEQKQIAS…LNDILQKAIL (77 aa).

Belongs to the heat shock protein 90 family. Homodimer.

Its subcellular location is the cytoplasm. Molecular chaperone. Has ATPase activity. The chain is Chaperone protein HtpG from Rickettsia typhi (strain ATCC VR-144 / Wilmington).